Consider the following 237-residue polypeptide: Ribonuclease PH (237 aa).

Residues R86 and 124–126 (GTR) each bind phosphate.

The protein belongs to the RNase PH family. As to quaternary structure, homohexameric ring arranged as a trimer of dimers.

It carries out the reaction tRNA(n+1) + phosphate = tRNA(n) + a ribonucleoside 5'-diphosphate. Its function is as follows. Phosphorolytic 3'-5' exoribonuclease that plays an important role in tRNA 3'-end maturation. Removes nucleotide residues following the 3'-CCA terminus of tRNAs; can also add nucleotides to the ends of RNA molecules by using nucleoside diphosphates as substrates, but this may not be physiologically important. Probably plays a role in initiation of 16S rRNA degradation (leading to ribosome degradation) during starvation. The polypeptide is Ribonuclease PH (Dinoroseobacter shibae (strain DSM 16493 / NCIMB 14021 / DFL 12)).